Reading from the N-terminus, the 444-residue chain is uncharacterized protein (444 aa).

Transmembrane regions (helical) follow at residues 2-22, 24-44, 52-72, 106-126, 134-154, 174-194, 228-248, 261-281, 305-325, 343-363, 377-397, and 424-444; these read PILIVAVGVLILLFLIIKVKL, TFVSLIVVSFLVAIGLGMDIN, TGIGGQLGHLALVFGLGAMLG, FIIGIALFFEVGLVLLIPIVY, MPFLYLGIPMAAALNVTHGFL, VLLFGIIIAVPTTVIAGPLFN, FAISAVTSLFPVIFMAMATIF, IIEFIGTPGTAMLISLLLALY, IAMMLLIIGGGGAFKQVLIDG, LFVAWTIAAVLRLCLGSATVA, AGSVNPALMVLATGAGSVIAC, and LLTTVLSVTGLGCVLLAGLVM.

It belongs to the GntP permease family.

It localises to the cell membrane. This is an uncharacterized protein from Bacillus subtilis (strain 168).